We begin with the raw amino-acid sequence, 386 residues long: Patatin group M-1 (386 aa).

A signal peptide spans 1-23 (MATTKSFLILFFMILATTSSTCA). The region spanning 32 to 229 (LSIDGGGIKG…TVGDPALLSL (198 aa)) is the PNPLA domain. A GXGXXG motif is present at residues 36 to 41 (GGGIKG). The GXSXG signature appears at 75–79 (GTSTG). Catalysis depends on Ser77, which acts as the Nucleophile. Residue Asn115 is glycosylated (N-linked (GlcNAc...) asparagine). Asp215 serves as the catalytic Proton acceptor. A DGA/G motif is present at residues 215–217 (DGG).

Belongs to the patatin family. As to expression, tuber.

The protein localises to the vacuole. Its function is as follows. Probable lipolytic acyl hydrolase (LAH), an activity which is thought to be involved in the response of tubers to pathogens. This chain is Patatin group M-1, found in Solanum tuberosum (Potato).